An 87-amino-acid polypeptide reads, in one-letter code: Small ribosomal subunit protein bS20 (87 aa).

Residues 1–26 (MANTAQAKKRVRQNIKQRERNSGLRS) are disordered.

This sequence belongs to the bacterial ribosomal protein bS20 family.

Its function is as follows. Binds directly to 16S ribosomal RNA. The protein is Small ribosomal subunit protein bS20 of Nitrosomonas eutropha (strain DSM 101675 / C91 / Nm57).